The primary structure comprises 230 residues: Cytochrome c-552 (230 aa).

Residues 1–47 (MTTYLSQDRLRNKENDTMTYQHSKMYQSRTFLLFSALLLVAGQASAA) form the signal peptide. The heme c site is built by Cys-63, Cys-66, His-67, Cys-166, Cys-169, and His-170.

Binds 2 heme c groups covalently per subunit.

It localises to the periplasm. Diheme, high potential cytochrome c. This chain is Cytochrome c-552 (cyc1), found in Acidithiobacillus ferridurans.